The following is a 221-amino-acid chain: Endo-1,4-beta-xylanase 1 (221 aa).

The first 22 residues, 1–22 (MKFFATIAALVVAAVAAPVAEA), serve as a signal peptide directing secretion. In terms of domain architecture, GH11 spans 29–221 (PMLIERAGPG…GTGSASVTVS (193 aa)). Catalysis depends on Glu-114, which acts as the Nucleophile. The active-site Proton donor is Glu-208.

Belongs to the glycosyl hydrolase 11 (cellulase G) family.

It is found in the secreted. The enzyme catalyses Endohydrolysis of (1-&gt;4)-beta-D-xylosidic linkages in xylans.. Its pathway is glycan degradation; xylan degradation. In terms of biological role, endo-1,4-beta-xylanase involved in the hydrolysis of xylan, a major structural heterogeneous polysaccharide found in plant biomass representing the second most abundant polysaccharide in the biosphere, after cellulose. Hydrolyzes xylans from oat spelt and birchwood at similar rates, but it has no detectable activity toward Avicel or carboxymethyl cellulose. This chain is Endo-1,4-beta-xylanase 1 (xynI), found in Aureobasidium pullulans (Black yeast).